We begin with the raw amino-acid sequence, 344 residues long: Phosphoribosylformylglycinamidine cyclo-ligase (344 aa).

The protein belongs to the AIR synthase family.

It localises to the cytoplasm. It carries out the reaction 2-formamido-N(1)-(5-O-phospho-beta-D-ribosyl)acetamidine + ATP = 5-amino-1-(5-phospho-beta-D-ribosyl)imidazole + ADP + phosphate + H(+). It participates in purine metabolism; IMP biosynthesis via de novo pathway; 5-amino-1-(5-phospho-D-ribosyl)imidazole from N(2)-formyl-N(1)-(5-phospho-D-ribosyl)glycinamide: step 2/2. The polypeptide is Phosphoribosylformylglycinamidine cyclo-ligase (Neisseria meningitidis serogroup C (strain 053442)).